We begin with the raw amino-acid sequence, 450 residues long: MREVISIHVGQAGIQVGNACWELFCLEHGIQPDGQMPSDKTIGGGDDAFNTFFSETGAGKHVPRCVFLDLEPTVDDEVRTGTYRQLFHPEQLISGKEDAANNFARGHYTIGKEIVDLCLDRIRKLADQCTGLQGFLVFNSVGGGTGSGLGSLLLERLSVDYGKKSKLGFTVYPSPQVSTAVVEPYNSVLSTHSLLEHTDVAVMLDNEAVYDICRRNLDIERPTYTNLNRLIAQVISSLTASLRFDGALNVDVTEFQTNLVPYPRIHFMLSSYAPVISAEKAYHEQLSVAEITNSAFEPASMMAKCDPRHGKYMACCLMYRGDVVPKDVNAAVATIKTKRTIQFVDWCPTGFKCGINYQPPTVVPGGDLAKVMRAVCMISNSTAIAEVFSRIDHKFDLMYAKRAFVHWYVGEGMEEGEFSEAREDLAALEKDYEEVGIETAEGEGEEEGME.

Glutamine 11 serves as a coordination point for GTP. Lysine 40 is subject to N6-acetyllysine. Residues glutamate 71, serine 140, glycine 144, threonine 145, threonine 179, asparagine 206, and asparagine 228 each contribute to the GTP site. Position 71 (glutamate 71) interacts with Mg(2+). Residue glutamate 254 is part of the active site.

This sequence belongs to the tubulin family. As to quaternary structure, dimer of alpha and beta chains. A typical microtubule is a hollow water-filled tube with an outer diameter of 25 nm and an inner diameter of 15 nM. Alpha-beta heterodimers associate head-to-tail to form protofilaments running lengthwise along the microtubule wall with the beta-tubulin subunit facing the microtubule plus end conferring a structural polarity. Microtubules usually have 13 protofilaments but different protofilament numbers can be found in some organisms and specialized cells. The cofactor is Mg(2+). Post-translationally, acetylation of alpha chains at Lys-40 stabilizes microtubules and affects affinity and processivity of microtubule motors. This modification has a role in multiple cellular functions, ranging from cell motility, cell cycle progression or cell differentiation to intracellular trafficking and signaling.

It is found in the cytoplasm. The protein resides in the cytoskeleton. It carries out the reaction GTP + H2O = GDP + phosphate + H(+). In terms of biological role, tubulin is the major constituent of microtubules, a cylinder consisting of laterally associated linear protofilaments composed of alpha- and beta-tubulin heterodimers. Microtubules grow by the addition of GTP-tubulin dimers to the microtubule end, where a stabilizing cap forms. Below the cap, tubulin dimers are in GDP-bound state, owing to GTPase activity of alpha-tubulin. The chain is Tubulin alpha chain from Oxytricha granulifera (Ciliate).